Here is a 349-residue protein sequence, read N- to C-terminus: Holliday junction branch migration complex subunit RuvB (349 aa).

A large ATPase domain (RuvB-L) region spans residues 1-185 (MSQEKERLIS…FGSIFRLDFY (185 aa)). ATP is bound by residues leucine 24, arginine 25, glycine 66, lysine 69, threonine 70, threonine 71, 132–134 (EDY), arginine 175, tyrosine 185, and arginine 222. Threonine 70 provides a ligand contact to Mg(2+). A small ATPAse domain (RuvB-S) region spans residues 186–256 (DEEAIHDIVR…IAAESLACLE (71 aa)). Residues 259-349 (KLGLDEIDHK…QQGLWTENGS (91 aa)) are head domain (RuvB-H). Residues arginine 314 and arginine 319 each coordinate DNA.

It belongs to the RuvB family. As to quaternary structure, homohexamer. Forms an RuvA(8)-RuvB(12)-Holliday junction (HJ) complex. HJ DNA is sandwiched between 2 RuvA tetramers; dsDNA enters through RuvA and exits via RuvB. An RuvB hexamer assembles on each DNA strand where it exits the tetramer. Each RuvB hexamer is contacted by two RuvA subunits (via domain III) on 2 adjacent RuvB subunits; this complex drives branch migration. In the full resolvosome a probable DNA-RuvA(4)-RuvB(12)-RuvC(2) complex forms which resolves the HJ.

The protein localises to the cytoplasm. It catalyses the reaction ATP + H2O = ADP + phosphate + H(+). Its function is as follows. The RuvA-RuvB-RuvC complex processes Holliday junction (HJ) DNA during genetic recombination and DNA repair, while the RuvA-RuvB complex plays an important role in the rescue of blocked DNA replication forks via replication fork reversal (RFR). RuvA specifically binds to HJ cruciform DNA, conferring on it an open structure. The RuvB hexamer acts as an ATP-dependent pump, pulling dsDNA into and through the RuvAB complex. RuvB forms 2 homohexamers on either side of HJ DNA bound by 1 or 2 RuvA tetramers; 4 subunits per hexamer contact DNA at a time. Coordinated motions by a converter formed by DNA-disengaged RuvB subunits stimulates ATP hydrolysis and nucleotide exchange. Immobilization of the converter enables RuvB to convert the ATP-contained energy into a lever motion, pulling 2 nucleotides of DNA out of the RuvA tetramer per ATP hydrolyzed, thus driving DNA branch migration. The RuvB motors rotate together with the DNA substrate, which together with the progressing nucleotide cycle form the mechanistic basis for DNA recombination by continuous HJ branch migration. Branch migration allows RuvC to scan DNA until it finds its consensus sequence, where it cleaves and resolves cruciform DNA. The polypeptide is Holliday junction branch migration complex subunit RuvB (Dehalococcoides mccartyi (strain CBDB1)).